A 345-amino-acid polypeptide reads, in one-letter code: S-adenosylmethionine:tRNA ribosyltransferase-isomerase (345 aa).

It belongs to the QueA family. In terms of assembly, monomer.

The protein localises to the cytoplasm. The catalysed reaction is 7-aminomethyl-7-carbaguanosine(34) in tRNA + S-adenosyl-L-methionine = epoxyqueuosine(34) in tRNA + adenine + L-methionine + 2 H(+). The protein operates within tRNA modification; tRNA-queuosine biosynthesis. Functionally, transfers and isomerizes the ribose moiety from AdoMet to the 7-aminomethyl group of 7-deazaguanine (preQ1-tRNA) to give epoxyqueuosine (oQ-tRNA). In Shewanella putrefaciens (strain CN-32 / ATCC BAA-453), this protein is S-adenosylmethionine:tRNA ribosyltransferase-isomerase.